The sequence spans 67 residues: DNA-directed RNA polymerase subunit omega (67 aa).

It belongs to the RNA polymerase subunit omega family. The RNAP catalytic core consists of 2 alpha, 1 beta, 1 beta' and 1 omega subunit. When a sigma factor is associated with the core the holoenzyme is formed, which can initiate transcription.

The enzyme catalyses RNA(n) + a ribonucleoside 5'-triphosphate = RNA(n+1) + diphosphate. Promotes RNA polymerase assembly. Latches the N- and C-terminal regions of the beta' subunit thereby facilitating its interaction with the beta and alpha subunits. This chain is DNA-directed RNA polymerase subunit omega, found in Nitrosomonas eutropha (strain DSM 101675 / C91 / Nm57).